The sequence spans 350 residues: Ubiquitin carboxyl-terminal hydrolase 11 (350 aa).

A USP domain is found at 49–344 (KGLYNVSGND…SACLLFYEME (296 aa)). The active-site Nucleophile is cysteine 59. Histidine 302 serves as the catalytic Proton acceptor.

It belongs to the peptidase C19 family.

The catalysed reaction is Thiol-dependent hydrolysis of ester, thioester, amide, peptide and isopeptide bonds formed by the C-terminal Gly of ubiquitin (a 76-residue protein attached to proteins as an intracellular targeting signal).. The sequence is that of Ubiquitin carboxyl-terminal hydrolase 11 (ubp11) from Schizosaccharomyces pombe (strain 972 / ATCC 24843) (Fission yeast).